The following is a 155-amino-acid chain: UPF0225 protein ECA2332 (155 aa).

It belongs to the UPF0225 family.

This Pectobacterium atrosepticum (strain SCRI 1043 / ATCC BAA-672) (Erwinia carotovora subsp. atroseptica) protein is UPF0225 protein ECA2332.